The chain runs to 531 residues: Transactivator/viroplasmin protein (531 aa).

Disordered stretches follow at residues 80 to 101 and 505 to 531; these read ASGK…TATG and CKSE…SVLV. Polar residues-rich tracts occupy residues 91-100 and 505-517; these read SATSPEQTAT and CKSE…TSEE. Residues 518 to 531 are compositionally biased toward acidic residues; that stretch reads GLQESEDEDFSVLV.

This sequence belongs to the caulimoviridae viroplasmin family.

It is found in the host cytoplasm. Functionally, enhances the translation of downstream ORFs on polycistronic mRNAs. The sequence is that of Transactivator/viroplasmin protein from Cestrum yellow leaf curling virus (CmYLCV).